The following is a 227-amino-acid chain: Octanoyltransferase (227 aa).

The BPL/LPL catalytic domain maps to Asp35 to Ala210. Residues Arg74–His81, Ser141–Gly143, and Gly154–Ala156 each bind substrate. Residue Cys172 is the Acyl-thioester intermediate of the active site.

It belongs to the LipB family.

The protein resides in the cytoplasm. It carries out the reaction octanoyl-[ACP] + L-lysyl-[protein] = N(6)-octanoyl-L-lysyl-[protein] + holo-[ACP] + H(+). It functions in the pathway protein modification; protein lipoylation via endogenous pathway; protein N(6)-(lipoyl)lysine from octanoyl-[acyl-carrier-protein]: step 1/2. In terms of biological role, catalyzes the transfer of endogenously produced octanoic acid from octanoyl-acyl-carrier-protein onto the lipoyl domains of lipoate-dependent enzymes. Lipoyl-ACP can also act as a substrate although octanoyl-ACP is likely to be the physiological substrate. This Pectobacterium atrosepticum (strain SCRI 1043 / ATCC BAA-672) (Erwinia carotovora subsp. atroseptica) protein is Octanoyltransferase.